Here is a 276-residue protein sequence, read N- to C-terminus: Diaminopimelate epimerase (276 aa).

3 residues coordinate substrate: Asn-13, Gln-46, and Asn-66. Catalysis depends on Cys-75, which acts as the Proton donor. Substrate contacts are provided by residues 76 to 77, Asn-159, Asn-192, and 210 to 211; these read GN and ER. Catalysis depends on Cys-219, which acts as the Proton acceptor. 220 to 221 lines the substrate pocket; that stretch reads GT.

The protein belongs to the diaminopimelate epimerase family. As to quaternary structure, homodimer.

It is found in the cytoplasm. The catalysed reaction is (2S,6S)-2,6-diaminopimelate = meso-2,6-diaminopimelate. Its pathway is amino-acid biosynthesis; L-lysine biosynthesis via DAP pathway; DL-2,6-diaminopimelate from LL-2,6-diaminopimelate: step 1/1. Its function is as follows. Catalyzes the stereoinversion of LL-2,6-diaminopimelate (L,L-DAP) to meso-diaminopimelate (meso-DAP), a precursor of L-lysine and an essential component of the bacterial peptidoglycan. The chain is Diaminopimelate epimerase from Teredinibacter turnerae (strain ATCC 39867 / T7901).